Consider the following 150-residue polypeptide: MKNILKTQVHVVVIYLLIKIAFSQVKTDFDVNWSTSKMVRITNRLGDGLTLNLHCKSADDDLGLKILAPNGSWSFKFRTSIVGTTLFYCHFTWPGQSKRFDIYDDDRDGVRSHISCINCIWDISIQGPCMFSESDHAFNICYDWNGNLRT.

The N-terminal stretch at 1 to 23 (MKNILKTQVHVVVIYLLIKIAFS) is a signal peptide. N-linked (GlcNAc...) asparagine glycans are attached at residues N32 and N70.

Belongs to the plant self-incompatibility (S1) protein family.

The protein resides in the secreted. The protein is S-protein homolog 3 of Arabidopsis thaliana (Mouse-ear cress).